The following is a 350-amino-acid chain: MKLVDEAEILVTAGNGGNGCVGFRREKFIPLGGPDGGDGGNGGSVWIVADENVNTLVDFRHERAFKAQRGENGMGRQAYGKGGEDRVIVVPVGTVVMNVQTDEIIGDMTQHGDRLLVAKGGKGGLGNMHFKSSVNRAPRQSTTGEEGEERLLKLELKLLADVGLLGFPNAGKSTLIRAVSAATPKVADYPFTTLYPNLGVVSVEAYRSFVIADVPGLIEGAADGAGLGTQFLRHLQRTRLLLHLVDISPMDGGVDGVSPVDQVRTIERELERHDPALLEKPRWLVLNKADLMFPEEAQAAAEAIVAELGWTAPWYLVSALGRDGTFPIMKDVMAFFDRQREDELEARNAG.

The Obg domain occupies 1 to 159 (MKLVDEAEIL…RLLKLELKLL (159 aa)). One can recognise an OBG-type G domain in the interval 160–337 (ADVGLLGFPN…IMKDVMAFFD (178 aa)). Residues 166 to 173 (GFPNAGKS), 191 to 195 (FTTLY), 213 to 216 (DVPG), 287 to 290 (NKAD), and 318 to 320 (SAL) each bind GTP. Mg(2+) contacts are provided by serine 173 and threonine 193.

This sequence belongs to the TRAFAC class OBG-HflX-like GTPase superfamily. OBG GTPase family. As to quaternary structure, monomer. It depends on Mg(2+) as a cofactor.

Its subcellular location is the cytoplasm. Functionally, an essential GTPase which binds GTP, GDP and possibly (p)ppGpp with moderate affinity, with high nucleotide exchange rates and a fairly low GTP hydrolysis rate. Plays a role in control of the cell cycle, stress response, ribosome biogenesis and in those bacteria that undergo differentiation, in morphogenesis control. The polypeptide is GTPase Obg (Xanthomonas campestris pv. campestris (strain 8004)).